Reading from the N-terminus, the 299-residue chain is Large ribosomal subunit protein uL29m (299 aa).

It belongs to the universal ribosomal protein uL29 family. As to quaternary structure, component of the mitochondrial large ribosomal subunit. Mature mitochondrial ribosomes consist of a small (37S) and a large (54S) subunit. The 37S subunit contains at least 33 different proteins and 1 molecule of RNA (15S). The 54S subunit contains at least 45 different proteins and 1 molecule of RNA (21S).

Its subcellular location is the mitochondrion. This is Large ribosomal subunit protein uL29m (MRPL4) from Scheffersomyces stipitis (strain ATCC 58785 / CBS 6054 / NBRC 10063 / NRRL Y-11545) (Yeast).